We begin with the raw amino-acid sequence, 133 residues long: NAD(P)H-quinone oxidoreductase subunit 3 (133 aa).

3 helical membrane passes run 22-44 (YLLGFLLISSLVPILSLTASRLL), 77-97 (MFALVFVIFDVETVFLYPWAV), and 102-122 (LGLLAFVEALIFITILVVGLA).

It belongs to the complex I subunit 3 family. As to quaternary structure, NDH-1 can be composed of about 15 different subunits; different subcomplexes with different compositions have been identified which probably have different functions.

It localises to the cellular thylakoid membrane. The enzyme catalyses a plastoquinone + NADH + (n+1) H(+)(in) = a plastoquinol + NAD(+) + n H(+)(out). It catalyses the reaction a plastoquinone + NADPH + (n+1) H(+)(in) = a plastoquinol + NADP(+) + n H(+)(out). Its function is as follows. NDH-1 shuttles electrons from an unknown electron donor, via FMN and iron-sulfur (Fe-S) centers, to quinones in the respiratory and/or the photosynthetic chain. The immediate electron acceptor for the enzyme in this species is believed to be plastoquinone. Couples the redox reaction to proton translocation, and thus conserves the redox energy in a proton gradient. Cyanobacterial NDH-1 also plays a role in inorganic carbon-concentration. This Synechococcus sp. (strain ATCC 27144 / PCC 6301 / SAUG 1402/1) (Anacystis nidulans) protein is NAD(P)H-quinone oxidoreductase subunit 3.